A 428-amino-acid polypeptide reads, in one-letter code: Kynureninase (428 aa).

Residues threonine 104, threonine 105, 132 to 135 (FPSD), aspartate 213, histidine 216, and tyrosine 238 contribute to the pyridoxal 5'-phosphate site. Position 239 is an N6-(pyridoxal phosphate)lysine (lysine 239). Residues tryptophan 267 and threonine 295 each contribute to the pyridoxal 5'-phosphate site.

It belongs to the kynureninase family. In terms of assembly, homodimer. Requires pyridoxal 5'-phosphate as cofactor.

It catalyses the reaction L-kynurenine + H2O = anthranilate + L-alanine + H(+). It carries out the reaction 3-hydroxy-L-kynurenine + H2O = 3-hydroxyanthranilate + L-alanine + H(+). It participates in amino-acid degradation; L-kynurenine degradation; L-alanine and anthranilate from L-kynurenine: step 1/1. Its pathway is cofactor biosynthesis; NAD(+) biosynthesis; quinolinate from L-kynurenine: step 2/3. Catalyzes the cleavage of L-kynurenine (L-Kyn) and L-3-hydroxykynurenine (L-3OHKyn) into anthranilic acid (AA) and 3-hydroxyanthranilic acid (3-OHAA), respectively. This is Kynureninase from Bacillus cereus (strain ZK / E33L).